The sequence spans 165 residues: Phosphopantetheine adenylyltransferase (165 aa).

Serine 10 is a binding site for substrate. Residues 10–11 (SF) and histidine 18 contribute to the ATP site. Substrate contacts are provided by lysine 42, threonine 79, and arginine 93. ATP contacts are provided by residues 94-96 (GLR), glutamate 104, and 129-135 (VRPITAT).

It belongs to the bacterial CoaD family. In terms of assembly, homohexamer. The cofactor is Mg(2+).

Its subcellular location is the cytoplasm. The enzyme catalyses (R)-4'-phosphopantetheine + ATP + H(+) = 3'-dephospho-CoA + diphosphate. It participates in cofactor biosynthesis; coenzyme A biosynthesis; CoA from (R)-pantothenate: step 4/5. Its function is as follows. Reversibly transfers an adenylyl group from ATP to 4'-phosphopantetheine, yielding dephospho-CoA (dPCoA) and pyrophosphate. This is Phosphopantetheine adenylyltransferase from Nitrobacter hamburgensis (strain DSM 10229 / NCIMB 13809 / X14).